The chain runs to 516 residues: GMP synthase [glutamine-hydrolyzing] (516 aa).

The region spanning 8–198 (KILILDFGSQ…VVNICGCDTL (191 aa)) is the Glutamine amidotransferase type-1 domain. Cys84 acts as the Nucleophile in catalysis. Active-site residues include His172 and Glu174. Positions 199–391 (WNIENIIEND…LGLPYNMLYR (193 aa)) constitute a GMPS ATP-PPase domain. 226–232 (SGGVDSS) contributes to the ATP binding site.

As to quaternary structure, homodimer.

The enzyme catalyses XMP + L-glutamine + ATP + H2O = GMP + L-glutamate + AMP + diphosphate + 2 H(+). It functions in the pathway purine metabolism; GMP biosynthesis; GMP from XMP (L-Gln route): step 1/1. Functionally, catalyzes the synthesis of GMP from XMP. The sequence is that of GMP synthase [glutamine-hydrolyzing] from Francisella tularensis subsp. holarctica (strain LVS).